We begin with the raw amino-acid sequence, 298 residues long: Ribosomal protein L11 methyltransferase (298 aa).

S-adenosyl-L-methionine contacts are provided by T152, G173, D195, and N234.

The protein belongs to the methyltransferase superfamily. PrmA family.

It localises to the cytoplasm. The catalysed reaction is L-lysyl-[protein] + 3 S-adenosyl-L-methionine = N(6),N(6),N(6)-trimethyl-L-lysyl-[protein] + 3 S-adenosyl-L-homocysteine + 3 H(+). In terms of biological role, methylates ribosomal protein L11. The sequence is that of Ribosomal protein L11 methyltransferase from Ralstonia pickettii (strain 12J).